An 85-amino-acid polypeptide reads, in one-letter code: Alpha-defensin 11 (85 aa).

Positions 1–11 (ALVLLAFQVQA) are cleaved as a signal peptide. Positions 12 to 50 (DPIQNTDEETKTEEQPGEEDQAVSVSFGDPEGTSLQEES) are excised as a propeptide. Residues 14-46 (IQNTDEETKTEEQPGEEDQAVSVSFGDPEGTSL) form a disordered region. Disulfide bonds link Cys56-Cys84, Cys58-Cys73, and Cys63-Cys83.

Belongs to the alpha-defensin family. In terms of tissue distribution, paneth cells of the small bowel.

It localises to the secreted. Probably contributes to the antimicrobial barrier function of the small bowel mucosa. In Mus musculus (Mouse), this protein is Alpha-defensin 11 (Defa11).